A 317-amino-acid polypeptide reads, in one-letter code: MMNERVNKVALIGAGFVGSSYAFALINQGITDELVIIDVNREKAMGDVMDLNHGKAFAPHPVKTSYGTYEDCKDADIVCICAGANQKPGETRLELVEKNLAIFKSIVGEVMASGFDGIFLVATNPVDILTYATWTFSGLPKERVIGSGTTLDSARFRYMLSEYFGAAPQNVHAHIIGEHGDTELPVWSHANIGGVPVQQLLEKHAAYKQDELDQIVDDVKNAAYHIIEKKGATYYGVAMSLARITKAILRNENSILTVSTYLDGQYGVNDVFIGVPAVVNRNGIAGVTELELNETEQAQFSRSANVLKDILAPHFAE.

Residues valine 17, aspartate 38, lysine 43, tyrosine 69, and 83–84 (GA) each bind NAD(+). Positions 86 and 92 each coordinate substrate. NAD(+) contacts are provided by residues serine 105, 122–124 (ATN), and serine 147. 124–127 (NPVD) contributes to the substrate binding site. Position 152–155 (152–155 (DSAR)) interacts with substrate. Arginine 157 and histidine 172 together coordinate beta-D-fructose 1,6-bisphosphate. Catalysis depends on histidine 179, which acts as the Proton acceptor. Tyrosine 224 is modified (phosphotyrosine). Threonine 233 is a binding site for substrate.

The protein belongs to the LDH/MDH superfamily. LDH family. As to quaternary structure, homotetramer.

The protein resides in the cytoplasm. The enzyme catalyses (S)-lactate + NAD(+) = pyruvate + NADH + H(+). Its pathway is fermentation; pyruvate fermentation to lactate; (S)-lactate from pyruvate: step 1/1. Its activity is regulated as follows. Allosterically activated by fructose 1,6-bisphosphate (FBP). In terms of biological role, catalyzes the conversion of lactate to pyruvate. The chain is L-lactate dehydrogenase from Bacillus velezensis (strain DSM 23117 / BGSC 10A6 / LMG 26770 / FZB42) (Bacillus amyloliquefaciens subsp. plantarum).